Here is a 276-residue protein sequence, read N- to C-terminus: uncharacterized protein (276 aa).

It to E.coli YjfZ.

This is an uncharacterized protein from Escherichia coli (strain K12).